A 232-amino-acid chain; its full sequence is Phospholipase A2 hemilipin (232 aa).

The first 18 residues, 1–18 (MTFLILTILATVTPSLYS), serve as a signal peptide directing secretion. Positions 19–105 (HVVQRELRVN…QRCSGSAEGR (87 aa)) are excised as a propeptide. The Ca(2+) site is built by tryptophan 115, glycine 117, and glycine 119. 5 cysteine pairs are disulfide-bonded: cysteine 116–cysteine 137, cysteine 136–cysteine 175, cysteine 143–cysteine 168, cysteine 166–cysteine 206, and cysteine 211–cysteine 219. The N-linked (GlcNAc...) asparagine glycan is linked to asparagine 124. The active site involves histidine 140. Aspartate 141 provides a ligand contact to Ca(2+). Asparagine 157 carries an N-linked (GlcNAc...) asparagine glycan. A propeptide spanning residues 214-217 (KRDA) is cleaved from the precursor.

The protein belongs to the phospholipase A2 family. Group III subfamily. Heterodimer composed of a small subunit and a large subunit; disulfid-linked. It depends on Ca(2+) as a cofactor. Expressed by the venom gland.

It is found in the secreted. It carries out the reaction a 1,2-diacyl-sn-glycero-3-phosphocholine + H2O = a 1-acyl-sn-glycero-3-phosphocholine + a fatty acid + H(+). Its function is as follows. Scorpion venom phospholipase A2 (PLA2) that shows high hydrolytic activities towards lecithin and acts as an effective blocker of all angiogenesis key steps in vivo and in vitro. It has no effect on apoptosis and does not display hemolytic, inflammatory or neurotoxic effects. PLA2 catalyzes the calcium-dependent hydrolysis of the 2-acyl groups in 3-sn-phosphoglycerides. In Hemiscorpius lepturus (Scorpion), this protein is Phospholipase A2 hemilipin.